A 157-amino-acid chain; its full sequence is Transcription elongation factor GreA (157 aa).

The stretch at Leu14 to Glu37 forms a coiled coil.

The protein belongs to the GreA/GreB family.

Its function is as follows. Necessary for efficient RNA polymerase transcription elongation past template-encoded arresting sites. The arresting sites in DNA have the property of trapping a certain fraction of elongating RNA polymerases that pass through, resulting in locked ternary complexes. Cleavage of the nascent transcript by cleavage factors such as GreA or GreB allows the resumption of elongation from the new 3'terminus. GreA releases sequences of 2 to 3 nucleotides. In Vibrio cholerae serotype O1 (strain ATCC 39315 / El Tor Inaba N16961), this protein is Transcription elongation factor GreA.